A 455-amino-acid chain; its full sequence is tRNA modification GTPase MnmE (455 aa).

Positions 26, 86, and 125 each coordinate (6S)-5-formyl-5,6,7,8-tetrahydrofolate. The region spanning 222–376 (GLKTAIIGRP…VEEKINQIFF (155 aa)) is the TrmE-type G domain. Residue Asn232 participates in K(+) binding. Residues 232 to 237 (NVGKSS), 251 to 257 (TDIAGTT), and 276 to 279 (DTAG) contribute to the GTP site. Residue Ser236 coordinates Mg(2+). K(+) is bound by residues Thr251, Ile253, and Thr256. Thr257 serves as a coordination point for Mg(2+). Lys455 lines the (6S)-5-formyl-5,6,7,8-tetrahydrofolate pocket.

Belongs to the TRAFAC class TrmE-Era-EngA-EngB-Septin-like GTPase superfamily. TrmE GTPase family. Homodimer. Heterotetramer of two MnmE and two MnmG subunits. The cofactor is K(+).

The protein localises to the cytoplasm. In terms of biological role, exhibits a very high intrinsic GTPase hydrolysis rate. Involved in the addition of a carboxymethylaminomethyl (cmnm) group at the wobble position (U34) of certain tRNAs, forming tRNA-cmnm(5)s(2)U34. In Lactococcus lactis subsp. cremoris (strain MG1363), this protein is tRNA modification GTPase MnmE.